Reading from the N-terminus, the 341-residue chain is DNA fragmentation factor subunit beta (341 aa).

The region spanning 7–83 is the CIDE-N domain; the sequence is KPKTFKLRSL…LLTAGQTWQG (77 aa).

In terms of assembly, heterodimer of DFFA and DFFB. Interacts with H1-1.

It localises to the cytoplasm. It is found in the nucleus. Its activity is regulated as follows. Inhibited by DFFA (DFF45). Interacts with HIST1H1A. Its function is as follows. Nuclease that induces DNA fragmentation and chromatin condensation during apoptosis. Degrades naked DNA and induces apoptotic morphology. This is DNA fragmentation factor subunit beta (DFFB) from Bos taurus (Bovine).